The chain runs to 522 residues: Cytochrome P450 monooxygenase FGSG_08207 (522 aa).

The helical transmembrane segment at 10-30 (LLLSKPVVLGLAACALLFLIG) threads the bilayer. 2 N-linked (GlcNAc...) asparagine glycosylation sites follow: N104 and N155. Residue C441 participates in heme binding.

Belongs to the cytochrome P450 family. The cofactor is heme.

The protein localises to the membrane. Its pathway is secondary metabolite biosynthesis. Its function is as follows. Cytochrome P450 monooxygenase; part of the gene cluster that mediates the biosynthesis of the lipopeptide fusaristatin A. Fusaristatin A consists of a polyketide chain linked to three amino acid residues glutamine (Gln), dehydroalanine (dehydro-Ala), and beta-aminoisobutyric acid. The biosynthesis starts with formation of a linear polyketide chain by the highly reducing polyketide synthase PKS6. The gene cluster does not contain an acyl-CoA ligase or an acyl-transferase, and it is therefore predicted that the polyketide is transferred directly to the nonribosomal peptide synthetase NRPS7. Modules 1-3 from NRPS7 incorporate dehydro-Ala, Gln, and beta-aminoisobutyric acid in the compound, which is released by cyclization. The beta-aminoisobutyric acid units are most likely not freely available to the NRPS, but can be synthesized from thymine, which requires a dehydrogenase, a monooxygenase, and an aminotransferase. The fusaristatin A cluster contains a cytochrome P450 monooxygenase (FGSG_08207) and an aminotransferase (FGSG_17085), which theoretically can perform two of the enzymatic steps. The enzymes may however also be involved in biosynthesis of dehydroalanine or modification of the polyketide. The dehydro-Ala residue can be a result of cyclization, where serine is dehydrated. The last gene of the cluster encodes a protein with an A/B barrel domain found in variable enzymes, which hampers functional prediction. The polypeptide is Cytochrome P450 monooxygenase FGSG_08207 (Gibberella zeae (strain ATCC MYA-4620 / CBS 123657 / FGSC 9075 / NRRL 31084 / PH-1) (Wheat head blight fungus)).